A 168-amino-acid polypeptide reads, in one-letter code: uncharacterized protein (168 aa).

It localises to the mitochondrion. This is an uncharacterized protein from Marchantia polymorpha (Common liverwort).